Here is a 251-residue protein sequence, read N- to C-terminus: HTH-type transcriptional regulator UlaR (251 aa).

The HTH deoR-type domain occupies 3-58 (EAQRHQILLEMLAQLGFVTVEKVVERLGISPATARRDINKLGESGKLKKVRNGAEA). Residues 20 to 39 (VTVEKVVERLGISPATARRD) constitute a DNA-binding region (H-T-H motif).

It is found in the cytoplasm. Functionally, represses ulaG and the ulaABCDEF operon. In Shigella flexneri, this protein is HTH-type transcriptional regulator UlaR.